Reading from the N-terminus, the 508-residue chain is MNKSYKILLTGSVIAIGAMGLMANSINSREAERKEINTGPVVQAEGVASKNEEWYRYYPREYDSWKQTKKSDKITDLLREKPQLAIIWAGYGFAKDYNAPRGHFYAIQDNINTLRTGAPTGPSNGPMPTACWTCKSPDVPRLMDEVGENEFFTGKWAKYGNQIVNPIGCADCHNSQTGNLGFSRPHLGRALEASGVNLDEITFQDMRTLVCAQCHVEYYFRPTEWTDKTGKTKTAKVVTLPWAKGLSAENMEEYYDEYSFKDWTHKISKAPMLKAQHPGYELFSKGIHAQNGVSCADCHMPYKQQGSIKYTDHNIGNPLDDIASTCLTCHRDSEKAFRDRVASKLERKEQLMKMAMDTLAAAHLEAGKAWELGATEAEMQPVLELLRSGQWLWDYSIASHGSFFHSPEETLRLLGVANDKGGKARIKLAAILAQHGLIGYQVPDFSTKEKAQALAGVPLQKLITEKKAFESTLLEQWNEEAVKAGRLDPKTLEGMSNKSSWSQTELSQ.

An N-terminal signal peptide occupies residues 1-23; that stretch reads MNKSYKILLTGSVIAIGAMGLMA. Residue histidine 103 coordinates heme c. Residues cysteine 131, cysteine 134, and lysine 135 each coordinate heme. The heme c site is built by cysteine 169, cysteine 172, histidine 173, cysteine 211, cysteine 214, and histidine 215. Residues glutamate 217, tyrosine 218, lysine 274, and glutamine 276 each contribute to the Ca(2+) site. Residue tyrosine 218 participates in substrate binding. Histidine 277 lines the substrate pocket. Residues histidine 288, cysteine 295, cysteine 298, histidine 299, histidine 313, cysteine 326, cysteine 329, histidine 330, and histidine 405 each contribute to the heme c site. The interval 485–508 is disordered; the sequence is GRLDPKTLEGMSNKSSWSQTELSQ. Positions 494–508 are enriched in polar residues; sequence GMSNKSSWSQTELSQ.

It belongs to the cytochrome c-552 family. The cofactor is Ca(2+). Heme c is required as a cofactor.

The protein localises to the periplasm. It catalyses the reaction 6 Fe(III)-[cytochrome c] + NH4(+) + 2 H2O = 6 Fe(II)-[cytochrome c] + nitrite + 8 H(+). Its pathway is nitrogen metabolism; nitrate reduction (assimilation). Catalyzes the reduction of nitrite to ammonia, consuming six electrons in the process. This Desulfotalea psychrophila (strain LSv54 / DSM 12343) protein is Cytochrome c-552.